We begin with the raw amino-acid sequence, 670 residues long: Leucine-rich repeat-containing protein 45 (670 aa).

LRR repeat units follow at residues 87–108, 115–136, 145–166, 173–194, and 201–223; these read TVKS…ALGK, SIRS…FSFF, FLQR…ELAM, SLQE…ALLN, and TLKK…VEQA. Residues 234-645 are a coiled coil; it reads LSETQNRTSV…ISRMKEEEAQ (412 aa).

As to quaternary structure, homomer.

The protein resides in the cytoplasm. It localises to the cytoskeleton. It is found in the microtubule organizing center. The protein localises to the centrosome. In terms of biological role, component of the proteinaceous fiber-like linker between two centrioles, required for centrosome cohesion. This is Leucine-rich repeat-containing protein 45 (LRRC45) from Gallus gallus (Chicken).